Here is a 228-residue protein sequence, read N- to C-terminus: ATP synthase subunit a (228 aa).

6 helical membrane passes run 14 to 34 (YFLL…WLFF), 71 to 91 (WVPI…LGLL), 101 to 121 (ISLT…LGFY), 139 to 159 (FLLP…PIAL), 165 to 185 (ANLT…WVLM), and 188 to 208 (VAIA…EIGV).

Belongs to the ATPase A chain family. F-type ATPases have 2 components, CF(1) - the catalytic core - and CF(0) - the membrane proton channel. CF(1) has five subunits: alpha(3), beta(3), gamma(1), delta(1), epsilon(1). CF(0) has three main subunits: a, b and c.

Its subcellular location is the mitochondrion inner membrane. Mitochondrial membrane ATP synthase (F(1)F(0) ATP synthase or Complex V) produces ATP from ADP in the presence of a proton gradient across the membrane which is generated by electron transport complexes of the respiratory chain. F-type ATPases consist of two structural domains, F(1) - containing the extramembraneous catalytic core and F(0) - containing the membrane proton channel, linked together by a central stalk and a peripheral stalk. During catalysis, ATP synthesis in the catalytic domain of F(1) is coupled via a rotary mechanism of the central stalk subunits to proton translocation. Key component of the proton channel; it may play a direct role in the translocation of protons across the membrane. The protein is ATP synthase subunit a (ATP6) of Pisaster ochraceus (Ochre sea star).